The following is a 519-amino-acid chain: DNA damage-binding protein CMR1 (519 aa).

The segment at 35–92 (AEAGLGPTGKSRAAASSKPRVKKPAPKKIKQEDIAPRRTSSRLKGIEADSEKAKRKAE) is disordered. The segment covering 53-62 (PRVKKPAPKK) has biased composition (basic residues). The span at 78 to 92 (KGIEADSEKAKRKAE) shows a compositional bias: basic and acidic residues. WD repeat units lie at residues 240 to 280 (PHTR…AVEV), 287 to 327 (NEDQ…DQAE), 331 to 371 (LSEK…GKGD), 380 to 420 (EHES…EWAT), 442 to 485 (GRWV…LAQL), and 488 to 519 (DGIT…CLWM).

Belongs to the WD repeat DDB2/WDR76 family.

DNA-binding protein that binds to both single- and double-stranded DNA. Binds preferentially to UV-damaged DNA. May be involved in DNA-metabolic processes. The polypeptide is DNA damage-binding protein CMR1 (Phaeosphaeria nodorum (strain SN15 / ATCC MYA-4574 / FGSC 10173) (Glume blotch fungus)).